Here is a 78-residue protein sequence, read N- to C-terminus: Acyl carrier protein (78 aa).

Positions 4-78 (AEIRDKVYDI…QQAIDYIVKK (75 aa)) constitute a Carrier domain. Serine 39 bears the O-(pantetheine 4'-phosphoryl)serine mark.

It belongs to the acyl carrier protein (ACP) family. 4'-phosphopantetheine is transferred from CoA to a specific serine of apo-ACP by AcpS. This modification is essential for activity because fatty acids are bound in thioester linkage to the sulfhydryl of the prosthetic group.

It is found in the cytoplasm. It participates in lipid metabolism; fatty acid biosynthesis. Carrier of the growing fatty acid chain in fatty acid biosynthesis. The polypeptide is Acyl carrier protein (Chlorobium luteolum (strain DSM 273 / BCRC 81028 / 2530) (Pelodictyon luteolum)).